A 320-amino-acid chain; its full sequence is Zinc finger Ran-binding domain-containing protein 2 (320 aa).

S9 bears the Phosphoserine mark. The RanBP2-type 1 zinc finger occupies 9–40 (SDGDWICPDKKCGNVNFARRTSCNRCGREKTT). 3 positions are modified to N6-acetyllysine: K18, K54, and K92. A RanBP2-type 2 zinc finger spans residues 65 to 94 (SANDWQCKTCSNVNWARRSECNMCNTPKYA). The segment at 117-320 (REESDGEYDE…QVIGENTKQP (204 aa)) is disordered. A phosphoserine mark is found at S120, S153, S181, S188, and S193. Acidic residues predominate over residues 150–163 (DKESEGEEEDEDED). The required for nuclear targeting stretch occupies residues 151–320 (KESEGEEEDE…QVIGENTKQP (170 aa)). Residues 196-210 (KKSNRRSRSKSRSSH) are compositionally biased toward basic residues. 2 stretches are compositionally biased toward low complexity: residues 211–224 (SRSS…SSSR) and 232–242 (RSSSSSQSRSR). Residues 251–273 (SRGSKSRSSSRSHRGSSSPRKRS) show a composition bias toward basic residues.

It belongs to the ZRANB2 family. In terms of assembly, interacts with the C-terminal half of SNRP70/U1-70K, the Arg/Ser-rich domain of AKAP17A as well as with U2AF1 and CLK1. Post-translationally, phosphorylated on Ser-310 upon DNA damage, probably by ATM or ATR.

It is found in the nucleus. Its function is as follows. Splice factor required for alternative splicing of TRA2B/SFRS10 transcripts. Binds to ssRNA containing the consensus sequence 5'-AGGUAA-3'. May interfere with constitutive 5'-splice site selection. The polypeptide is Zinc finger Ran-binding domain-containing protein 2 (Pongo abelii (Sumatran orangutan)).